Reading from the N-terminus, the 426-residue chain is Serine hydroxymethyltransferase (426 aa).

Residues leucine 115 and 119 to 121 (GHI) each bind (6S)-5,6,7,8-tetrahydrofolate. The residue at position 225 (lysine 225) is an N6-(pyridoxal phosphate)lysine.

The protein belongs to the SHMT family. As to quaternary structure, homodimer. Pyridoxal 5'-phosphate is required as a cofactor.

The protein resides in the cytoplasm. Its pathway is amino-acid biosynthesis; glycine biosynthesis; glycine from L-serine: step 1/1. Catalyzes the reversible interconversion of serine and glycine with a modified folate serving as the one-carbon carrier. Also exhibits a pteridine-independent aldolase activity toward beta-hydroxyamino acids, producing glycine and aldehydes, via a retro-aldol mechanism. This chain is Serine hydroxymethyltransferase, found in Thermoplasma acidophilum (strain ATCC 25905 / DSM 1728 / JCM 9062 / NBRC 15155 / AMRC-C165).